The chain runs to 130 residues: Large ribosomal subunit protein bL19c (130 aa).

This sequence belongs to the bacterial ribosomal protein bL19 family.

The protein resides in the plastid. It is found in the chloroplast. The polypeptide is Large ribosomal subunit protein bL19c (rpl19) (Chlorella vulgaris (Green alga)).